Consider the following 371-residue polypeptide: UDP-N-acetylglucosamine--N-acetylmuramyl-(pentapeptide) pyrophosphoryl-undecaprenol N-acetylglucosamine transferase (371 aa).

Residues 10–12 (TGG), Asn124, Arg166, Ser196, and Gln301 contribute to the UDP-N-acetyl-alpha-D-glucosamine site.

This sequence belongs to the glycosyltransferase 28 family. MurG subfamily.

The protein localises to the cell membrane. The enzyme catalyses di-trans,octa-cis-undecaprenyl diphospho-N-acetyl-alpha-D-muramoyl-L-alanyl-D-glutamyl-meso-2,6-diaminopimeloyl-D-alanyl-D-alanine + UDP-N-acetyl-alpha-D-glucosamine = di-trans,octa-cis-undecaprenyl diphospho-[N-acetyl-alpha-D-glucosaminyl-(1-&gt;4)]-N-acetyl-alpha-D-muramoyl-L-alanyl-D-glutamyl-meso-2,6-diaminopimeloyl-D-alanyl-D-alanine + UDP + H(+). It functions in the pathway cell wall biogenesis; peptidoglycan biosynthesis. In terms of biological role, cell wall formation. Catalyzes the transfer of a GlcNAc subunit on undecaprenyl-pyrophosphoryl-MurNAc-pentapeptide (lipid intermediate I) to form undecaprenyl-pyrophosphoryl-MurNAc-(pentapeptide)GlcNAc (lipid intermediate II). The protein is UDP-N-acetylglucosamine--N-acetylmuramyl-(pentapeptide) pyrophosphoryl-undecaprenol N-acetylglucosamine transferase of Moorella thermoacetica (strain ATCC 39073 / JCM 9320).